Reading from the N-terminus, the 4516-residue chain is Dynein axonemal heavy chain 1 (4516 aa).

The interval 1 to 1748 (MVTLSISDTL…YIRAVNAEFI (1748 aa)) is stem. A disordered region spans residues 78–160 (SSGSDKSLKN…RKSPLAGTDK (83 aa)). Composition is skewed to basic and acidic residues over residues 83–97 (KSLK…KEEA) and 113–129 (ENHD…RNPE). AAA regions lie at residues 1749–1956 (YGYE…VISA), 2016–2249 (QAIR…TTVK), 2422–2682 (TMMP…VFQG), and 2780–2972 (DYNQ…CCTI). The GPAGTGKT motif signature appears at 1787–1794 (GPAGTGKT). Residue 1787-1794 (GPAGTGKT) coordinates ATP. The CFDEFNR motif signature appears at 1837-1843 (CFDEFNR). Residues 2054–2061 (GPTGSGKS), 2460–2467 (GPTGTGKT), and 2819–2826 (GVGGSGRS) contribute to the ATP site. Residues 2987-3285 (ATRFLHEIPE…MHKYHFVAKA (299 aa)) form a stalk region. Positions 3293 to 3394 (LREAQDDLEV…QDTVENLENM (102 aa)) form a coiled coil. 2 AAA regions span residues 3388–3618 (VENL…EERP) and 3831–4050 (LPAF…SYNS).

The protein belongs to the dynein heavy chain family. Consists of at least two heavy chains and a number of intermediate and light chains. As to expression, expressed in brain.

It localises to the cytoplasm. The protein localises to the cytoskeleton. The protein resides in the cilium axoneme. Its subcellular location is the cell projection. It is found in the cilium. It localises to the flagellum. In terms of biological role, force generating protein of cilia required for sperm flagellum motility. Produces force towards the minus ends of microtubules. Dynein has ATPase activity; the force-producing power stroke is thought to occur on release of ADP. Required in spermatozoa for the formation of the inner dynein arms and biogenesis of the axoneme. This is Dynein axonemal heavy chain 1 from Rattus norvegicus (Rat).